Reading from the N-terminus, the 256-residue chain is Low molecular mass lipoprotein 3 (256 aa).

Residues Met1 to Ala17 form the signal peptide.

This sequence belongs to the 30 kDa lipoprotein family. In terms of tissue distribution, detected in larval hemolymph (at protein level).

The protein localises to the secreted. In Bombyx mori (Silk moth), this protein is Low molecular mass lipoprotein 3.